Here is a 252-residue protein sequence, read N- to C-terminus: ATP synthase subunit a (252 aa).

5 consecutive transmembrane segments (helical) span residues 33-53, 92-112, 130-150, 196-216, and 217-237; these read GQVF…ALAA, VPFV…GALV, DINT…YAGL, LVVG…VMAL, and GLFT…TYIG.

The protein belongs to the ATPase A chain family. In terms of assembly, F-type ATPases have 2 components, CF(1) - the catalytic core - and CF(0) - the membrane proton channel. CF(1) has five subunits: alpha(3), beta(3), gamma(1), delta(1), epsilon(1). CF(0) has three main subunits: a(1), b(2) and c(9-12). The alpha and beta chains form an alternating ring which encloses part of the gamma chain. CF(1) is attached to CF(0) by a central stalk formed by the gamma and epsilon chains, while a peripheral stalk is formed by the delta and b chains.

The protein localises to the cellular thylakoid membrane. Functionally, key component of the proton channel; it plays a direct role in the translocation of protons across the membrane. This chain is ATP synthase subunit a, found in Synechococcus sp. (strain PCC 6716).